The chain runs to 150 residues: Placenta-specific protein 4 (150 aa).

In terms of tissue distribution, expressed in placental syncytiotrophoblast and choriocarcinoma cells.

This Homo sapiens (Human) protein is Placenta-specific protein 4 (PLAC4).